The sequence spans 384 residues: MGACVVMTDINISSGLDSNATGITAFSMPGWQLALWTAAYLALVLVAVMGNATVIWIILAHQRMRTVTNYFIVNLALADLCMAAFNAAFNFVYASHNIWYFGRAFCYFQNLFPITAMFVSIYSMTAIAADRYMAIVHPFQPRLSAPGTRAVIAGIWLVALALAFPQCFYSTITTDEGATKCVVAWPEDSGGKMLLLYHLIVIALIYFLPLVVMFVAYSVIGLTLWRRSVPGHQAHGANLRHLQAKKKFVKTMVLVVVTFAICWLPYHLYFILGTFQEDIYCHKFIQQVYLALFWLAMSSTMYNPIIYCCLNHRFRSGFRLAFRCCPWVTPTEEDKMELTYTPSLSTRVNRCHTKEIFFMSGDVAPSEAVNGQAESPQAGVSTEP.

Residues 1–32 (MGACVVMTDINISSGLDSNATGITAFSMPGWQ) are Extracellular-facing. N-linked (GlcNAc...) asparagine glycans are attached at residues asparagine 11 and asparagine 19. A helical membrane pass occupies residues 33–56 (LALWTAAYLALVLVAVMGNATVIW). At 57 to 69 (IILAHQRMRTVTN) the chain is on the cytoplasmic side. A helical transmembrane segment spans residues 70–90 (YFIVNLALADLCMAAFNAAFN). The Extracellular portion of the chain corresponds to 91-107 (FVYASHNIWYFGRAFCY). A disulfide bridge links cysteine 106 with cysteine 181. A helical transmembrane segment spans residues 108-129 (FQNLFPITAMFVSIYSMTAIAA). Over 130–149 (DRYMAIVHPFQPRLSAPGTR) the chain is Cytoplasmic. The chain crosses the membrane as a helical span at residues 150 to 170 (AVIAGIWLVALALAFPQCFYS). The Extracellular portion of the chain corresponds to 171 to 196 (TITTDEGATKCVVAWPEDSGGKMLLL). A helical membrane pass occupies residues 197–218 (YHLIVIALIYFLPLVVMFVAYS). Topologically, residues 219-251 (VIGLTLWRRSVPGHQAHGANLRHLQAKKKFVKT) are cytoplasmic. A helical transmembrane segment spans residues 252–272 (MVLVVVTFAICWLPYHLYFIL). The Extracellular segment spans residues 273-290 (GTFQEDIYCHKFIQQVYL). A helical transmembrane segment spans residues 291–310 (ALFWLAMSSTMYNPIIYCCL). The Cytoplasmic portion of the chain corresponds to 311 to 384 (NHRFRSGFRL…SPQAGVSTEP (74 aa)). The S-palmitoyl cysteine moiety is linked to residue cysteine 324.

This sequence belongs to the G-protein coupled receptor 1 family.

It localises to the cell membrane. This is a receptor for the tachykinin neuropeptide substance K (neurokinin A). It is associated with G proteins that activate a phosphatidylinositol-calcium second messenger system. The rank order of affinity of this receptor to tachykinins is: substance K &gt; neuromedin-K &gt; substance P. This Bos taurus (Bovine) protein is Substance-K receptor (TACR2).